Reading from the N-terminus, the 608-residue chain is MSAVFDASAFLATCSNRPGVYRMFDADAKLLYVGKAKSLKKRLASYFRKSGLAPKTAALVARIAQVETTITANETEALLLEQTLIKEWRPPYNILLRDDKSYPFVFLSSEDEYPRLSLHRGAKKRKGRYFGPYPSAGAIRESLNLLQKAFLVRQCEDSYFRNRTRPCLQYQIKRCKGPCVGLVSPEEYAEDVRHSVMFLEGRSNALADELNVGMEQAAMRLDFEKAAELRDQVAILRRVQDQQSMEGGNGDVDIVAAIVTPGGACVHLISVRGGRVLGSKNFFPQVAIEEEVGEVLLAFLGQYYLSHQERDLPAELIVNVTHEDFPVLVSAIAEARGRELEISYRVRGTRARWQQLAVTNAEQALGARLANRQHVAARFEALAEALDLAEPPQRLECFDISHSSGEATVASCVVFGPEGPLKSDYRRYNIEGVTAGDDYAAMHQALTRRFSRLKDGEGKMPDILLVDGGKGQLAMAQEVLQELAVAGLILLGVAKGVTRKPGLETLYLNDASHEFTLPADSPALHLIQQIRDEAHRFAITGHRARRGKARRTSTLEDVPGVGPKRRRDLLKHFGGLQELSRASIDELAKAPGISKKLAEQIYAVLHSE.

The region spanning N16–I94 is the GIY-YIG domain. A UVR domain is found at N204–V239.

This sequence belongs to the UvrC family. As to quaternary structure, interacts with UvrB in an incision complex.

The protein localises to the cytoplasm. The UvrABC repair system catalyzes the recognition and processing of DNA lesions. UvrC both incises the 5' and 3' sides of the lesion. The N-terminal half is responsible for the 3' incision and the C-terminal half is responsible for the 5' incision. The polypeptide is UvrABC system protein C (Pseudomonas aeruginosa (strain LESB58)).